Reading from the N-terminus, the 229-residue chain is UPF0319 protein Sbal223_2728 (229 aa).

The N-terminal stretch at 1 to 21 (MKSLLPISSLLVLLGSASAFA) is a signal peptide.

The protein belongs to the UPF0319 family.

This chain is UPF0319 protein Sbal223_2728, found in Shewanella baltica (strain OS223).